A 285-amino-acid chain; its full sequence is Aldo-keto reductase (285 aa).

165–175 is an NADP(+) binding site; sequence APLAGGILTGK.

This sequence belongs to the aldo/keto reductase family. Aldo/keto reductase 2 subfamily.

The protein is Aldo-keto reductase of Babesia bovis.